Reading from the N-terminus, the 555-residue chain is Tetracycline 7-halogenase (555 aa).

22-27 (GSGLSG) provides a ligand contact to FAD.

Belongs to the flavin-dependent halogenase family. Bacterial tryptophan halogenase subfamily. Homodimer.

It carries out the reaction tetracycline + FADH2 + chloride + O2 = 7-chlorotetracycline + FAD + 2 H2O + H(+). Its pathway is antibiotic biosynthesis. Its function is as follows. Involved in the biosynthesis of chlorotetracycline (CTC), an important member from antibiotics tetracycline (TC) family, which inhibits protein synthesis in bacteria and is widely involved in clinical therapy, animal feeds and aquaculture. Utilizes FADH(2) supplied by the flavin reductase CtcQ, to catalyze the chlorination of tetracycline (TC) at C7 position, leading to the production of 7-chlorotetracycline. The enzyme forms a lysine chloramine intermediate on an internal lysine residue before transferring the chlorine to the substrate. It is stereo-selective for the 4S (natural) isomer of tetracycline. This chain is Tetracycline 7-halogenase, found in Kitasatospora aureofaciens (Streptomyces aureofaciens).